Consider the following 461-residue polypeptide: MLKQKTLKDSFSLSGKGLHTGLDLTVTFNPAPDNHGYKIQRIDLEGQPTIDAVADNVTETTRGTVLSKNGVKVSTVEHGMAALYALGIDNCLIQVNGPEFPILDGSAQYYVQEIERVGTEEQSAVKDFYIIKSKIEFRDESTGSSIIVLPDENFSLNVLVSYDSTIIPNQFATLEDMHNFKDEVAASRTFVFVREIEPLLSAGLIKGGDLDNAIVIYERKMSQESYDKLADVMGVPHMDADQLGYINHKPLVWPNECARHKLLDVIGDLALIGKPIKGRIIATRPGHTINNKFARQMRKEIRLHEIQAPTYDCNREPVMDVNRIRELLPHRYPFQLVDKVIEMGASYIVGIKNITANEPFFQGHFPQEPVMPGVLQIEAMAQVGGLLVLNSVDEPERYSTYFMKIDGVKFRQKVVPGDTLLFRVELLAPIRRGISTMKGYAFVGEKVVCEAEFMAQIVKNK.

The interval 1-302 (MLKQKTLKDS…FARQMRKEIR (302 aa)) is UDP-3-O-acyl-N-acetylglucosamine deacetylase. H78, H260, and D264 together coordinate Zn(2+). H287 acts as the Proton donor in catalysis. The tract at residues 303–461 (LHEIQAPTYD…EFMAQIVKNK (159 aa)) is 3-hydroxyacyl-[acyl-carrier-protein] dehydratase. Residue H364 is part of the active site.

In the N-terminal section; belongs to the LpxC family. It in the C-terminal section; belongs to the thioester dehydratase family. Zn(2+) is required as a cofactor.

Its subcellular location is the cytoplasm. The enzyme catalyses a UDP-3-O-[(3R)-3-hydroxyacyl]-N-acetyl-alpha-D-glucosamine + H2O = a UDP-3-O-[(3R)-3-hydroxyacyl]-alpha-D-glucosamine + acetate. The catalysed reaction is a (3R)-hydroxyacyl-[ACP] = a (2E)-enoyl-[ACP] + H2O. Its pathway is glycolipid biosynthesis; lipid IV(A) biosynthesis; lipid IV(A) from (3R)-3-hydroxytetradecanoyl-[acyl-carrier-protein] and UDP-N-acetyl-alpha-D-glucosamine: step 2/6. Its function is as follows. Catalyzes the hydrolysis of UDP-3-O-myristoyl-N-acetylglucosamine to form UDP-3-O-myristoylglucosamine and acetate, the committed step in lipid A biosynthesis. In terms of biological role, involved in unsaturated fatty acids biosynthesis. Catalyzes the dehydration of short chain beta-hydroxyacyl-ACPs and long chain saturated and unsaturated beta-hydroxyacyl-ACPs. The sequence is that of Bifunctional enzyme LpxC/FabZ (lpxC/fabZ) from Bacteroides thetaiotaomicron (strain ATCC 29148 / DSM 2079 / JCM 5827 / CCUG 10774 / NCTC 10582 / VPI-5482 / E50).